The sequence spans 303 residues: tRNA pseudouridine synthase B (303 aa).

Residue Asp-38 is the Nucleophile of the active site.

The protein belongs to the pseudouridine synthase TruB family. Type 1 subfamily.

It carries out the reaction uridine(55) in tRNA = pseudouridine(55) in tRNA. In terms of biological role, responsible for synthesis of pseudouridine from uracil-55 in the psi GC loop of transfer RNAs. In Oceanobacillus iheyensis (strain DSM 14371 / CIP 107618 / JCM 11309 / KCTC 3954 / HTE831), this protein is tRNA pseudouridine synthase B.